The chain runs to 525 residues: GMP synthase [glutamine-hydrolyzing] (525 aa).

In terms of domain architecture, Glutamine amidotransferase type-1 spans 8–207 (KILILDFGSQ…AVAICGCGTN (200 aa)). The active-site Nucleophile is Cys85. Residues His181 and Glu183 contribute to the active site. The region spanning 208–400 (WKPSSIIEDA…LGLPYNMLYR (193 aa)) is the GMPS ATP-PPase domain. 235–241 (SGGVDSS) is a binding site for ATP.

In terms of assembly, homodimer.

The catalysed reaction is XMP + L-glutamine + ATP + H2O = GMP + L-glutamate + AMP + diphosphate + 2 H(+). The protein operates within purine metabolism; GMP biosynthesis; GMP from XMP (L-Gln route): step 1/1. Its function is as follows. Catalyzes the synthesis of GMP from XMP. The sequence is that of GMP synthase [glutamine-hydrolyzing] from Shewanella denitrificans (strain OS217 / ATCC BAA-1090 / DSM 15013).